The primary structure comprises 25 residues: Caerin-1.5 (25 aa).

At L25 the chain carries Leucine amide.

Expressed by the skin parotoid and/or rostral glands.

It is found in the secreted. Antibacterial peptide, that adopts an alpha helical conformation which can disrupt bacterial membranes. Each caerin displays a different antimicrobial specificity. The sequence is that of Caerin-1.5 from Ranoidea caerulea (Green tree frog).